Here is a 396-residue protein sequence, read N- to C-terminus: Elongation factor Tu (396 aa).

The tr-type G domain maps to 10–205; it reads KPHVNIGTIG…AVDESIPDPV (196 aa). Residues 19-26 are G1; sequence GHVDHGKT. Position 19–26 (19–26) interacts with GTP; that stretch reads GHVDHGKT. Residue threonine 26 coordinates Mg(2+). The segment at 62-66 is G2; the sequence is GITIN. The G3 stretch occupies residues 83-86; that stretch reads DAPG. Residues 83–87 and 138–141 each bind GTP; these read DAPGH and NKAD. The interval 138–141 is G4; the sequence is NKAD. The segment at 175 to 177 is G5; it reads SAL.

It belongs to the TRAFAC class translation factor GTPase superfamily. Classic translation factor GTPase family. EF-Tu/EF-1A subfamily. As to quaternary structure, monomer.

The protein localises to the cytoplasm. It carries out the reaction GTP + H2O = GDP + phosphate + H(+). Functionally, GTP hydrolase that promotes the GTP-dependent binding of aminoacyl-tRNA to the A-site of ribosomes during protein biosynthesis. This is Elongation factor Tu from Mycolicibacterium vanbaalenii (strain DSM 7251 / JCM 13017 / BCRC 16820 / KCTC 9966 / NRRL B-24157 / PYR-1) (Mycobacterium vanbaalenii).